The chain runs to 292 residues: Sulfofructosephosphate aldolase (292 aa).

The active-site Schiff-base intermediate with substrate is the Lys193.

This sequence belongs to the aldolase LacD family. In terms of assembly, homotetramer.

The enzyme catalyses 6-deoxy-6-sulfo-D-fructose 1-phosphate = (2S)-3-sulfolactaldehyde + dihydroxyacetone phosphate. Its function is as follows. Cleaves 6-deoxy-6-sulfo-D-fructose 1-phosphate (SFP) to form dihydroxyacetone phosphate (DHAP) and 3-sulfolactaldehyde (SLA). The polypeptide is Sulfofructosephosphate aldolase (yihT) (Escherichia coli (strain K12)).